A 465-amino-acid polypeptide reads, in one-letter code: Cysteine--tRNA ligase (465 aa).

Zn(2+) is bound at residue Cys-27. Residues 29–39 (PTVYDDAHLGH) carry the 'HIGH' region motif. The Zn(2+) site is built by Cys-207, His-237, and Glu-241. Positions 269 to 273 (KMSKS) match the 'KMSKS' region motif. Residue Lys-272 coordinates ATP.

Belongs to the class-I aminoacyl-tRNA synthetase family. Monomer. It depends on Zn(2+) as a cofactor.

It localises to the cytoplasm. It catalyses the reaction tRNA(Cys) + L-cysteine + ATP = L-cysteinyl-tRNA(Cys) + AMP + diphosphate. This chain is Cysteine--tRNA ligase (cysS), found in Helicobacter pylori (strain ATCC 700392 / 26695) (Campylobacter pylori).